The chain runs to 104 residues: Translation initiation factor 1A (104 aa).

The span at 1–14 (MRGQQTPPQQPTRV) shows a compositional bias: low complexity. Residues 1-20 (MRGQQTPPQQPTRVRTPREN) form a disordered region. Residues 12–87 (TRVRTPRENE…EKCDVIWRYT (76 aa)) enclose the S1-like domain.

The protein belongs to the eIF-1A family.

In terms of biological role, seems to be required for maximal rate of protein biosynthesis. Enhances ribosome dissociation into subunits and stabilizes the binding of the initiator Met-tRNA(I) to 40 S ribosomal subunits. The chain is Translation initiation factor 1A from Methanococcus maripaludis (strain DSM 14266 / JCM 13030 / NBRC 101832 / S2 / LL).